Consider the following 246-residue polypeptide: UDP-N-acetyl-D-mannosaminuronic acid transferase (246 aa).

It belongs to the glycosyltransferase 26 family.

It carries out the reaction UDP-N-acetyl-alpha-D-mannosaminouronate + N-acetyl-alpha-D-glucosaminyl-di-trans,octa-cis-undecaprenyl diphosphate = beta-D-ManNAcA-(1-&gt;4)-alpha-D-GlcNAc-di-trans,octa-cis-undecaprenyl diphosphate + UDP + H(+). It participates in bacterial outer membrane biogenesis; enterobacterial common antigen biosynthesis. Its function is as follows. Catalyzes the synthesis of Und-PP-GlcNAc-ManNAcA (Lipid II), the second lipid-linked intermediate involved in enterobacterial common antigen (ECA) synthesis. This is UDP-N-acetyl-D-mannosaminuronic acid transferase from Salmonella paratyphi A (strain ATCC 9150 / SARB42).